The following is a 313-amino-acid chain: tRNA dimethylallyltransferase (313 aa).

Glycine 11–threonine 18 lines the ATP pocket. Threonine 13 to threonine 18 is a binding site for substrate. Interaction with substrate tRNA regions lie at residues aspartate 36–leucine 39, glutamine 160–arginine 164, and arginine 243–arginine 248.

This sequence belongs to the IPP transferase family. As to quaternary structure, monomer. It depends on Mg(2+) as a cofactor.

It carries out the reaction adenosine(37) in tRNA + dimethylallyl diphosphate = N(6)-dimethylallyladenosine(37) in tRNA + diphosphate. Functionally, catalyzes the transfer of a dimethylallyl group onto the adenine at position 37 in tRNAs that read codons beginning with uridine, leading to the formation of N6-(dimethylallyl)adenosine (i(6)A). This is tRNA dimethylallyltransferase from Neisseria meningitidis serogroup A / serotype 4A (strain DSM 15465 / Z2491).